The chain runs to 545 residues: Sphingomyelin phosphodiesterase 5 (545 aa).

The N-terminal 35 residues, 1 to 35 (MSLRESPFPNGFLEGLHAVGWGLIFPCFWFLDRLI), are a transit peptide targeting the mitochondrion. Over 36-64 (AVCISTTLERMWRLEQECYLHPLKVVFGS) the chain is Mitochondrial matrix. The chain crosses the membrane as a helical; Signal-anchor for type II membrane protein span at residues 65–85 (ILFFILFVISTPFALLGFILW). Residues 86-545 (APLQAIRRPF…LSVSLDSEQN (460 aa)) lie on the Mitochondrial intermembrane side of the membrane. A Mg(2+)-binding site is contributed by Glu258. His529 acts as the Proton acceptor in catalysis.

Belongs to the neutral sphingomyelinase family. Mg(2+) is required as a cofactor. It depends on Mn(2+) as a cofactor.

The protein resides in the mitochondrion inner membrane. It localises to the endoplasmic reticulum membrane. It carries out the reaction a sphingomyelin + H2O = phosphocholine + an N-acylsphing-4-enine + H(+). It catalyses the reaction N-(hexadecanoyl)-sphing-4-enine-1-phosphocholine + H2O = N-hexadecanoylsphing-4-enine + phosphocholine + H(+). The protein operates within lipid metabolism; sphingolipid metabolism. Activated by the phospholipids cardiolipin, phosphatidylserine, and phosphatidylethanolamine. Strongest activation with cardiolipin. Functionally, catalyzes the hydrolysis of membrane sphingomyelin to form phosphorylcholine and ceramide. The sequence is that of Sphingomyelin phosphodiesterase 5 from Danio rerio (Zebrafish).